Here is a 261-residue protein sequence, read N- to C-terminus: Type III pantothenate kinase (261 aa).

6–13 (DVGNTNTV) is a binding site for ATP. 107–110 (GADR) contributes to the substrate binding site. Residue aspartate 109 is the Proton acceptor of the active site. Position 129 (aspartate 129) interacts with K(+). Position 132 (threonine 132) interacts with ATP. A substrate-binding site is contributed by threonine 183.

This sequence belongs to the type III pantothenate kinase family. Homodimer. Requires NH4(+) as cofactor. K(+) is required as a cofactor.

Its subcellular location is the cytoplasm. It carries out the reaction (R)-pantothenate + ATP = (R)-4'-phosphopantothenate + ADP + H(+). It functions in the pathway cofactor biosynthesis; coenzyme A biosynthesis; CoA from (R)-pantothenate: step 1/5. Its function is as follows. Catalyzes the phosphorylation of pantothenate (Pan), the first step in CoA biosynthesis. The sequence is that of Type III pantothenate kinase from Kosmotoga olearia (strain ATCC BAA-1733 / DSM 21960 / TBF 19.5.1).